We begin with the raw amino-acid sequence, 162 residues long: Interleukin-2 (162 aa).

The first 20 residues, 1–20 (MYKIQLLSCIALTLALVANG), serve as a signal peptide directing secretion. The O-linked (GalNAc...) threonine glycan is linked to T23. N70 is a glycosylation site (N-linked (GlcNAc...) asparagine). A disulfide bridge connects residues C79 and C134.

This sequence belongs to the IL-2 family.

It localises to the secreted. Cytokine produced by activated CD4-positive helper T-cells and to a lesser extend activated CD8-positive T-cells and natural killer (NK) cells that plays pivotal roles in the immune response and tolerance. Binds to a receptor complex composed of either the high-affinity trimeric IL-2R (IL2RA/CD25, IL2RB/CD122 and IL2RG/CD132) or the low-affinity dimeric IL-2R (IL2RB and IL2RG). Interaction with the receptor leads to oligomerization and conformation changes in the IL-2R subunits resulting in downstream signaling starting with phosphorylation of JAK1 and JAK3. In turn, JAK1 and JAK3 phosphorylate the receptor to form a docking site leading to the phosphorylation of several substrates including STAT5. This process leads to activation of several pathways including STAT, phosphoinositide-3-kinase/PI3K and mitogen-activated protein kinase/MAPK pathways. Functions as a T-cell growth factor and can increase NK-cell cytolytic activity as well. Promotes strong proliferation of activated B-cells and subsequently immunoglobulin production. Plays a pivotal role in regulating the adaptive immune system by controlling the survival and proliferation of regulatory T-cells, which are required for the maintenance of immune tolerance. Moreover, participates in the differentiation and homeostasis of effector T-cell subsets, including Th1, Th2, Th17 as well as memory CD8-positive T-cells. The polypeptide is Interleukin-2 (IL2) (Cervus elaphus (Red deer)).